A 408-amino-acid polypeptide reads, in one-letter code: uncharacterized protein (408 aa).

Residues 56 to 76 form a helical membrane-spanning segment; it reads YWAGPAAASMVAAVTPYVAWL.

It belongs to the mycobacterial PPE family.

The protein localises to the cell membrane. This is an uncharacterized protein from Mycobacterium bovis (strain ATCC BAA-935 / AF2122/97).